Reading from the N-terminus, the 120-residue chain is FK506-binding protein 1A (120 aa).

The region spanning 26–114 is the PPIase FKBP-type domain; that stretch reads GDNVDVHYKG…IFETELVGIK (89 aa).

This sequence belongs to the FKBP-type PPIase family. FKBP1 subfamily.

The protein resides in the cytoplasm. It catalyses the reaction [protein]-peptidylproline (omega=180) = [protein]-peptidylproline (omega=0). PPIases accelerate the folding of proteins. It catalyzes the cis-trans isomerization of proline imidic peptide bonds in oligopeptides. In Neurospora crassa (strain ATCC 24698 / 74-OR23-1A / CBS 708.71 / DSM 1257 / FGSC 987), this protein is FK506-binding protein 1A (fkr-2).